The primary structure comprises 313 residues: Porphobilinogen deaminase (313 aa).

At Cys-242 the chain carries S-(dipyrrolylmethanemethyl)cysteine.

Belongs to the HMBS family. In terms of assembly, monomer. The cofactor is dipyrromethane.

The enzyme catalyses 4 porphobilinogen + H2O = hydroxymethylbilane + 4 NH4(+). It functions in the pathway porphyrin-containing compound metabolism; protoporphyrin-IX biosynthesis; coproporphyrinogen-III from 5-aminolevulinate: step 2/4. In terms of biological role, tetrapolymerization of the monopyrrole PBG into the hydroxymethylbilane pre-uroporphyrinogen in several discrete steps. The protein is Porphobilinogen deaminase of Pseudomonas syringae pv. syringae (strain B728a).